The chain runs to 543 residues: Tetrahydroberberine oxidase (543 aa).

An N-terminal signal peptide occupies residues 1 to 26 (MIPNSSSSSILSLLVLLLFSTSSSWA). Cysteines 37 and 97 form a disulfide. N-linked (GlcNAc...) asparagine glycosylation is found at Asn54, Asn74, Asn135, Asn142, Asn162, Asn295, Asn335, Asn440, and Asn482. The region spanning 75-250 (STQKPEFIIT…LSWKVKLVPV (176 aa)) is the FAD-binding PCMH-type domain. Residues 112-175 (HDVEGLSYVS…NTLGFPAGFC (64 aa)) constitute a cross-link (6-(S-cysteinyl)-8alpha-(pros-histidyl)-FAD (His-Cys)).

It belongs to the oxygen-dependent FAD-linked oxidoreductase family. It depends on FAD as a cofactor. Post-translationally, the FAD cofactor is bound via a bicovalent 6-S-cysteinyl, 8alpha-N1-histidyl FAD linkage.

It carries out the reaction (S)-canadine + 2 O2 + H(+) = berberine + 2 H2O2. In terms of biological role, catalyzes the oxidation of different tetrahydroprotoberberines, such as (S)-canadine, (S)-scoulerine and (S)-tetrahydropalmatine. This is Tetrahydroberberine oxidase from Argemone mexicana (Mexican prickly poppy).